The chain runs to 198 residues: Recombination protein RecR (198 aa).

Residues 57-72 (CPVCFNITDAERCDVC) form a C4-type zinc finger. Residues 80-173 (NLICVVEEPG…VVSRIAYGLP (94 aa)) form the Toprim domain.

It belongs to the RecR family.

Functionally, may play a role in DNA repair. It seems to be involved in an RecBC-independent recombinational process of DNA repair. It may act with RecF and RecO. This Deinococcus deserti (strain DSM 17065 / CIP 109153 / LMG 22923 / VCD115) protein is Recombination protein RecR.